A 380-amino-acid polypeptide reads, in one-letter code: MIDFPIKYRLIKKEKYTGARLGEIITPHGTFPTPMFMPVGTQATVKTQSPEELQQMGSGIILANTYHLWLRPGDELIAKAGGLHKFMNWDQAILTDSGGFQVYSLAEKRDISEEGVTFKNHLNGSKMFLSPEKAISVQNNLGSDIMMSFDECPQFYQPYDYVKKSIERTSRWAERGLKAHRRPHDQGLFGIVQGAGFEDLRRQSSHDLVSMDFPGYSIGGLAVGETHEEMNAVLDFTVPLLPENKPRYLMGVGAPDSLIDGVIRGVDMYDCVLPTRIARNGTCMTSNGRLVVKNAAYAEDFSPIDPECDCYTCKNYTRAYVRHLLKADETFGIRLTSYHNLYFLVNLMAKVRQAIVDDNLLEFRQDFIEKYGYNASNRNF.

The Proton acceptor role is filled by D96. Substrate contacts are provided by residues 96 to 100 (DSGGF), D150, Q193, and G220. The interval 251–257 (GVGAPDS) is RNA binding. Catalysis depends on D270, which acts as the Nucleophile. An RNA binding; important for wobble base 34 recognition region spans residues 275–279 (TRIAR). Residues C308, C310, C313, and H339 each coordinate Zn(2+).

This sequence belongs to the queuine tRNA-ribosyltransferase family. In terms of assembly, homodimer. Within each dimer, one monomer is responsible for RNA recognition and catalysis, while the other monomer binds to the replacement base PreQ1. Zn(2+) is required as a cofactor.

The catalysed reaction is 7-aminomethyl-7-carbaguanine + guanosine(34) in tRNA = 7-aminomethyl-7-carbaguanosine(34) in tRNA + guanine. Its pathway is tRNA modification; tRNA-queuosine biosynthesis. Functionally, catalyzes the base-exchange of a guanine (G) residue with the queuine precursor 7-aminomethyl-7-deazaguanine (PreQ1) at position 34 (anticodon wobble position) in tRNAs with GU(N) anticodons (tRNA-Asp, -Asn, -His and -Tyr). Catalysis occurs through a double-displacement mechanism. The nucleophile active site attacks the C1' of nucleotide 34 to detach the guanine base from the RNA, forming a covalent enzyme-RNA intermediate. The proton acceptor active site deprotonates the incoming PreQ1, allowing a nucleophilic attack on the C1' of the ribose to form the product. After dissociation, two additional enzymatic reactions on the tRNA convert PreQ1 to queuine (Q), resulting in the hypermodified nucleoside queuosine (7-(((4,5-cis-dihydroxy-2-cyclopenten-1-yl)amino)methyl)-7-deazaguanosine). This chain is Queuine tRNA-ribosyltransferase, found in Streptococcus thermophilus (strain ATCC BAA-250 / LMG 18311).